The sequence spans 197 residues: Small ribosomal subunit protein uS2 (197 aa).

Belongs to the universal ribosomal protein uS2 family.

The sequence is that of Small ribosomal subunit protein uS2 (rps2) from Archaeoglobus fulgidus (strain ATCC 49558 / DSM 4304 / JCM 9628 / NBRC 100126 / VC-16).